A 310-amino-acid polypeptide reads, in one-letter code: Olfactory receptor 5P54 (310 aa).

Topologically, residues 1–25 (MNGGNHTSMTELFILGPTEDPTFCI) are extracellular. Asn5 carries N-linked (GlcNAc...) asparagine glycosylation. Residues 26-46 (AFFVIFLGVYMVTLVGNISII) form a helical membrane-spanning segment. The Cytoplasmic portion of the chain corresponds to 47 to 54 (TLIRISSQ). Residues 55 to 75 (LHTPVYLFLNHLAFVDILYST) form a helical membrane-spanning segment. Topologically, residues 76-99 (LVSVIMLMELLEHELALPVAACAA) are extracellular. Residues Cys97 and Cys189 are joined by a disulfide bond. Residues 100–120 (ELCITVLFGSSECFLLAAMAY) form a helical membrane-spanning segment. At 121–133 (DCYVAICSPLLYS) the chain is on the cytoplasmic side. Residues 134–154 (TLMSSRVCFLLLGMSYVGGCM) form a helical membrane-spanning segment. Over 155-196 (NGWIFTGCLLNLSFYGPYQIDHFFCDFSPLLKLSCSDVSIIG) the chain is Extracellular. Residue Asn165 is glycosylated (N-linked (GlcNAc...) asparagine). The helical transmembrane segment at 197-217 (IIPSISSGSIIVVTVLVIAVF) threads the bilayer. Residues 218 to 237 (YICILMTILKMHSTDGCHKA) lie on the Cytoplasmic side of the membrane. A helical membrane pass occupies residues 238–258 (FSTCNSYLTAVTLYYGTITFI). Residues 259–271 (YVMPKSNYSTEKN) are Extracellular-facing. Asn265 is a glycosylation site (N-linked (GlcNAc...) asparagine). Residues 272–292 (KVLSEFYTVVIPMLNHLIYSL) traverse the membrane as a helical segment. Residues 293–310 (KNRDVKDALRKAIVRVYT) are Cytoplasmic-facing.

It belongs to the G-protein coupled receptor 1 family.

Its subcellular location is the cell membrane. In terms of biological role, potential odorant receptor. This is Olfactory receptor 5P54 from Mus musculus (Mouse).